Consider the following 439-residue polypeptide: Beta-conglycinin beta subunit 1 (439 aa).

The N-terminal stretch at 1–23 (MMRVRFPLLVLLGTVFLASVCVS) is a signal peptide. Cupin type-1 domains follow at residues 34 to 193 (FYLR…EEIN) and 240 to 401 (FNLR…QDVE). Residue N351 is glycosylated (N-linked (GlcNAc...) asparagine). The interval 411 to 439 (YFVDAQPQQKEEGSKGRKGPFPSILGALY) is disordered. Positions 430 to 439 (PFPSILGALY) are necessary for sorting to protein storage vacuole.

It belongs to the 7S seed storage protein family. In terms of assembly, the alpha-, alpha'-, and beta-subunits associate in various combinations to form trimeric proteins. Post-translationally, the N-linked glycans are not essential for the folding and assembly into trimers. In terms of tissue distribution, expressed in seeds. Not detected in cotyledons or in mature plants.

It is found in the vacuole. Its subcellular location is the aleurone grain. The protein localises to the endoplasmic reticulum. The protein resides in the protein storage vacuole. Functionally, seed storage protein. Accumulates during seed development and is hydrolyzed after germination to provide a carbon and nitrogen source for the developing seedling. In Glycine max (Soybean), this protein is Beta-conglycinin beta subunit 1.